A 159-amino-acid polypeptide reads, in one-letter code: 6,7-dimethyl-8-ribityllumazine synthase (159 aa).

5-amino-6-(D-ribitylamino)uracil contacts are provided by residues Trp26, 57-59 (ALE), and 79-81 (CVI). Position 84–85 (84–85 (GT)) interacts with (2S)-2-hydroxy-3-oxobutyl phosphate. His87 serves as the catalytic Proton donor. Asn112 serves as a coordination point for 5-amino-6-(D-ribitylamino)uracil. (2S)-2-hydroxy-3-oxobutyl phosphate is bound at residue Arg126.

It belongs to the DMRL synthase family.

It carries out the reaction (2S)-2-hydroxy-3-oxobutyl phosphate + 5-amino-6-(D-ribitylamino)uracil = 6,7-dimethyl-8-(1-D-ribityl)lumazine + phosphate + 2 H2O + H(+). Its pathway is cofactor biosynthesis; riboflavin biosynthesis; riboflavin from 2-hydroxy-3-oxobutyl phosphate and 5-amino-6-(D-ribitylamino)uracil: step 1/2. In terms of biological role, catalyzes the formation of 6,7-dimethyl-8-ribityllumazine by condensation of 5-amino-6-(D-ribitylamino)uracil with 3,4-dihydroxy-2-butanone 4-phosphate. This is the penultimate step in the biosynthesis of riboflavin. This Corynebacterium efficiens (strain DSM 44549 / YS-314 / AJ 12310 / JCM 11189 / NBRC 100395) protein is 6,7-dimethyl-8-ribityllumazine synthase.